The chain runs to 1616 residues: Replicase large subunit (1616 aa).

Positions 50–458 are methyltransferase; it reads FSKVISEEQT…QSLSMTFYLH (409 aa). The Alphavirus-like MT domain occupies 72–281; sequence TFYNTQNAVH…HSYSNILKYV (210 aa). Positions 801–963 constitute a (+)RNA virus helicase ATP-binding domain; that stretch reads VVYSDMAKLR…KLEVDEVETR (163 aa). The tract at residues 830–1085 is helicase; that stretch reads LVDGVPGCGK…RHTCSLKYYT (256 aa). Residue 833–840 coordinates ATP; sequence GVPGCGKT. One can recognise a (+)RNA virus helicase C-terminal domain in the interval 964–1116; that stretch reads RTTLRCPADV…DMYKVDAGTQ (153 aa). One can recognise a RdRp catalytic domain in the interval 1380-1493; sequence MDVLELDISK…YFPKGCEFPD (114 aa).

This sequence belongs to the ssRNA positive-strand viruses RNA-directed RNA polymerase family. As to quaternary structure, heterodimer of a large and a small subunit. Interacts, via its helicase region, with the Nicotiana tabacum arginine decarboxylase 1A (ADC1A) C-terminal internal region.

It carries out the reaction RNA(n) + a ribonucleoside 5'-triphosphate = RNA(n+1) + diphosphate. It catalyses the reaction ATP + H2O = ADP + phosphate + H(+). Is an RNA-dependent RNA polymerase active in viral RNA replication. Its function is as follows. Is a methyltransferase active in RNA capping and an RNA helicase. Methyltransferase displays a cytoplasmic capping enzyme activity. This function is necessary since all viral RNAs are synthesized in the cytoplasm, and host capping enzymes are restricted to the nucleus. Helicase region probably exhibits NTPase and RNA unwinding activities (Potential). It also acts as a suppressor of RNA-mediated gene silencing, also known as post-transcriptional gene silencing (PTGS), a mechanism of plant viral defense that limits the accumulation of viral RNAs. May mediate silencing suppression through either inhibition of HEN1-mediated siRNA or siRNA demethylation. This Nicotiana tabacum (Common tobacco) protein is Replicase large subunit.